A 203-amino-acid chain; its full sequence is Endo-type membrane-bound lytic murein transglycosylase A (203 aa).

An N-terminal signal peptide occupies residues 1 to 15 (MKLRWLMWLVVFLAG). Residue cysteine 16 is the site of N-palmitoyl cysteine attachment. Cysteine 16 carries S-diacylglycerol cysteine lipidation.

This sequence belongs to the transglycosylase Slt family.

The protein resides in the cell outer membrane. The enzyme catalyses Endolytic cleavage of the (1-&gt;4)-beta-glycosidic linkage between N-acetylmuramic acid (MurNAc) and N-acetylglucosamine (GlcNAc) residues in peptidoglycan with concomitant formation of a 1,6-anhydrobond in the MurNAc residue.. In terms of biological role, murein-degrading enzyme. May play a role in recycling of muropeptides during cell elongation and/or cell division. Preferentially cleaves at a distance of more than two disaccharide units from the ends of the glycan chain. The protein is Endo-type membrane-bound lytic murein transglycosylase A of Cronobacter sakazakii (strain ATCC BAA-894) (Enterobacter sakazakii).